We begin with the raw amino-acid sequence, 590 residues long: Beta-glucosidase 29 (590 aa).

The N-terminal stretch at 1 to 21 is a signal peptide; that stretch reads MNVQIFILLLIISWLTPKITS. Residues Gln48, His151, and 196–197 contribute to the a beta-D-glucoside site; that span reads NE. Glu197 (proton donor) is an active-site residue. Cys216 and Cys224 are joined by a disulfide. Asn255 and Asn331 each carry an N-linked (GlcNAc...) asparagine glycan. A beta-D-glucoside is bound at residue Tyr341. An N-linked (GlcNAc...) asparagine glycan is attached at Asn371. A beta-D-glucoside-binding positions include Glu413, Trp463, 470–471, and Phe479; that span reads EW. Residue Glu413 is the Nucleophile of the active site. Asn522 and Asn553 each carry an N-linked (GlcNAc...) asparagine glycan.

The protein belongs to the glycosyl hydrolase 1 family.

The catalysed reaction is Hydrolysis of terminal, non-reducing beta-D-glucosyl residues with release of beta-D-glucose.. This is Beta-glucosidase 29 from Arabidopsis thaliana (Mouse-ear cress).